The chain runs to 443 residues: Protein king tubby (443 aa).

2 disordered regions span residues 57–80 (TNGS…NNMR) and 98–191 (HELE…EGDV). Positions 68-80 (AMNTSRNHSNNMR) are enriched in polar residues. Residues 113-128 (QHQQSASHSANSTQSQ) are compositionally biased toward low complexity. Serine 136 carries the post-translational modification Phosphoserine. Gly residues predominate over residues 177-186 (NGTGNGTGGE).

Belongs to the TUB family.

Its subcellular location is the cytoplasm. The protein localises to the nucleus. The protein resides in the cell projection. It is found in the cilium membrane. It localises to the rhabdomere. This Drosophila simulans (Fruit fly) protein is Protein king tubby.